A 399-amino-acid chain; its full sequence is GDP-D-glucose phosphorylase 1 (399 aa).

Residue His-237 is the Tele-GMP-histidine intermediate of the active site.

The protein belongs to the GDPGP1 family.

The protein localises to the cytoplasm. The catalysed reaction is GDP-alpha-D-glucose + phosphate = alpha-D-glucose 1-phosphate + GDP + H(+). Functionally, specific and highly efficient GDP-D-glucose phosphorylase regulating the levels of GDP-D-glucose in cells. The chain is GDP-D-glucose phosphorylase 1 (gdpgp1) from Xenopus laevis (African clawed frog).